An 89-amino-acid chain; its full sequence is Small ribosomal subunit protein uS14A (89 aa).

The protein belongs to the universal ribosomal protein uS14 family. In terms of assembly, part of the 30S ribosomal subunit. Contacts proteins S3 and S10.

Functionally, binds 16S rRNA, required for the assembly of 30S particles and may also be responsible for determining the conformation of the 16S rRNA at the A site. This is Small ribosomal subunit protein uS14A from Staphylococcus haemolyticus (strain JCSC1435).